A 513-amino-acid polypeptide reads, in one-letter code: Secreted LysM effector Vd6LysM (513 aa).

A signal peptide spans 1–19 (MSFIKSLLLAAAAVASVSA). 4 LysM domains span residues 38-85 (SYWV…SYCV), 136-182 (KFHW…NVCV), 219-265 (KFHW…QVCV), and 302-348 (KFHW…QVCV). The segment covering 357 to 367 (TTTRPPTTTAP) has biased composition (low complexity). The tract at residues 357 to 377 (TTTRPPTTTAPGNGVSTPQPT) is disordered. LysM domains are found at residues 387 to 433 (KFHW…NVCV) and 465 to 511 (KFHW…NVCV).

This sequence belongs to the secreted LysM effector family.

In terms of biological role, might have a role in sequestration of chitin oligosaccharides (breakdown products of fungal cell walls that are released during invasion and act as triggers of host immunity) to dampen host defense. Does not play an important role during host colonization. The protein is Secreted LysM effector Vd6LysM of Verticillium dahliae (strain VdLs.17 / ATCC MYA-4575 / FGSC 10137) (Verticillium wilt).